Consider the following 452-residue polypeptide: Protein FAM222A (452 aa).

Belongs to the FAM222 family.

The protein is Protein FAM222A (FAM222A) of Homo sapiens (Human).